The sequence spans 230 residues: Cytidylate kinase (230 aa).

11-19 (GQSAAGKST) provides a ligand contact to ATP.

It belongs to the cytidylate kinase family. Type 1 subfamily.

It localises to the cytoplasm. The catalysed reaction is CMP + ATP = CDP + ADP. It carries out the reaction dCMP + ATP = dCDP + ADP. This is Cytidylate kinase from Chloroflexus aggregans (strain MD-66 / DSM 9485).